Here is a 676-residue protein sequence, read N- to C-terminus: ATP-dependent zinc metalloprotease FtsH (676 aa).

Over 1 to 12 (MSFFDKIFKKFH) the chain is Cytoplasmic. The helical transmembrane segment at 13-33 (MGVLYFAVILIGATFIYCYFT) threads the bilayer. Residues 34-115 (KHEKKDNNTF…DPRPWNGYEH (82 aa)) lie on the Extracellular side of the membrane. A helical transmembrane segment spans residues 116-136 (VFWVFRQCLTMLFFYCFFLFF). Residues 137 to 676 (ADTIKQMGQE…EVLSTDSEQT (540 aa)) are Cytoplasmic-facing. 212-219 (GPPGTGKT) provides a ligand contact to ATP. H433 serves as a coordination point for Zn(2+). Residue E434 is part of the active site. H437 and D509 together coordinate Zn(2+). The segment at 610-676 (EKEETNAPTQ…EVLSTDSEQT (67 aa)) is disordered. The span at 615–636 (NAPTQTTSQMSSNNETTNTDKT) shows a compositional bias: polar residues. The span at 650 to 667 (NQESNESNPNNNEKASPE) shows a compositional bias: low complexity.

The protein in the central section; belongs to the AAA ATPase family. It in the C-terminal section; belongs to the peptidase M41 family. Homohexamer. The cofactor is Zn(2+).

Its subcellular location is the cell membrane. Its function is as follows. Acts as a processive, ATP-dependent zinc metallopeptidase for both cytoplasmic and membrane proteins. Plays a role in the quality control of integral membrane proteins. This Aster yellows witches'-broom phytoplasma (strain AYWB) protein is ATP-dependent zinc metalloprotease FtsH.